Consider the following 125-residue polypeptide: Plastocyanin (125 aa).

An N-terminal signal peptide occupies residues 1–34 (MKVLASFARRLSLFAVAAVLCVGSFFLSAAPASA). The region spanning 35-125 (QTVAIKMGAD…AGMVGKIVVQ (91 aa)) is the Plastocyanin-like domain. Positions 73, 110, 113, and 118 each coordinate Cu cation.

It belongs to the plastocyanin family. It depends on Cu(2+) as a cofactor.

Its subcellular location is the cellular thylakoid membrane. Participates in electron transfer between P700 and the cytochrome b6-f complex in photosystem I. This is Plastocyanin (petE) from Synechococcus elongatus (strain ATCC 33912 / PCC 7942 / FACHB-805) (Anacystis nidulans R2).